Here is a 75-residue protein sequence, read N- to C-terminus: Penaeidin-3l (75 aa).

The N-terminal stretch at 1 to 19 is a signal peptide; it reads MRLVVCLVFLASFALVCQG. Residue Gln20 is modified to Pyrrolidone carboxylic acid. Disulfide bonds link Cys44/Cys59, Cys48/Cys66, and Cys60/Cys67. Ser74 carries the post-translational modification Serine amide.

The protein belongs to the penaeidin family.

The protein resides in the cytoplasmic granule. In terms of biological role, antibacterial and antifungal activity. Presents chitin-binding activity. This Penaeus setiferus (Atlantic white shrimp) protein is Penaeidin-3l.